Here is a 519-residue protein sequence, read N- to C-terminus: Cytochrome P450 4A11 (519 aa).

Positions 1 to 4 are excised as a propeptide; the sequence is MSVS. Glutamate 321 contributes to the heme binding site. Serine 440 bears the Phosphoserine mark. Cysteine 457 is a heme binding site.

It belongs to the cytochrome P450 family. It depends on heme as a cofactor. As to expression, expressed in liver. Expressed in S2 and S3 segments of proximal tubules in cortex and outer medulla of kidney.

Its subcellular location is the endoplasmic reticulum membrane. The protein localises to the microsome membrane. It catalyses the reaction an organic molecule + reduced [NADPH--hemoprotein reductase] + O2 = an alcohol + oxidized [NADPH--hemoprotein reductase] + H2O + H(+). The enzyme catalyses an omega-methyl-long-chain fatty acid + reduced [NADPH--hemoprotein reductase] + O2 = an omega-hydroxy-long-chain fatty acid + oxidized [NADPH--hemoprotein reductase] + H2O + H(+). The catalysed reaction is dodecanoate + reduced [NADPH--hemoprotein reductase] + O2 = 12-hydroxydodecanoate + oxidized [NADPH--hemoprotein reductase] + H2O + H(+). It carries out the reaction tetradecanoate + reduced [NADPH--hemoprotein reductase] + O2 = 14-hydroxytetradecanoate + oxidized [NADPH--hemoprotein reductase] + H2O + H(+). It catalyses the reaction hexadecanoate + reduced [NADPH--hemoprotein reductase] + O2 = 16-hydroxyhexadecanoate + oxidized [NADPH--hemoprotein reductase] + H2O + H(+). The enzyme catalyses (9Z)-octadecenoate + reduced [NADPH--hemoprotein reductase] + O2 = 18-hydroxy-(9Z)-octadecenoate + oxidized [NADPH--hemoprotein reductase] + H2O + H(+). The catalysed reaction is (5Z,8Z,11Z,14Z)-eicosatetraenoate + reduced [NADPH--hemoprotein reductase] + O2 = 20-hydroxy-(5Z,8Z,11Z,14Z)-eicosatetraenoate + oxidized [NADPH--hemoprotein reductase] + H2O + H(+). It carries out the reaction 22-hydroxydocosanoate + reduced [NADPH--hemoprotein reductase] + O2 = 22-oxodocosanoate + oxidized [NADPH--hemoprotein reductase] + 2 H2O + H(+). It catalyses the reaction 22-oxodocosanoate + reduced [NADPH--hemoprotein reductase] + O2 = docosanedioate + oxidized [NADPH--hemoprotein reductase] + H2O + 2 H(+). The enzyme catalyses (9R,10S)-epoxy-octadecanoate + reduced [NADPH--hemoprotein reductase] + O2 = 18-hydroxy-(9R,10S)-epoxy-octadecanoate + oxidized [NADPH--hemoprotein reductase] + H2O + H(+). The catalysed reaction is 3-hydroxyhexadecanoate + reduced [NADPH--hemoprotein reductase] + O2 = 3,16-dihydroxyhexadecanoate + oxidized [NADPH--hemoprotein reductase] + H2O + H(+). Its pathway is lipid metabolism; arachidonate metabolism. It participates in lipid metabolism; oxylipin biosynthesis. With respect to regulation, activated by cytochrome b5. Its function is as follows. A cytochrome P450 monooxygenase involved in the metabolism of fatty acids and their oxygenated derivatives (oxylipins). Mechanistically, uses molecular oxygen inserting one oxygen atom into a substrate, and reducing the second into a water molecule, with two electrons provided by NADPH via cytochrome P450 reductase (CPR; NADPH-ferrihemoprotein reductase). Catalyzes predominantly the oxidation of the terminal carbon (omega-oxidation) of saturated and unsaturated fatty acids, the catalytic efficiency decreasing in the following order: dodecanoic &gt; tetradecanoic &gt; (9Z)-octadecenoic &gt; (9Z,12Z)-octadecadienoic &gt; hexadecanoic acid. Acts as a major omega-hydroxylase for dodecanoic (lauric) acid in liver. Participates in omega-hydroxylation of (5Z,8Z,11Z,14Z)-eicosatetraenoic acid (arachidonate) to 20-hydroxyeicosatetraenoic acid (20-HETE), a signaling molecule acting both as vasoconstrictive and natriuretic with overall effect on arterial blood pressure. Can also catalyze the oxidation of the penultimate carbon (omega-1 oxidation) of fatty acids with lower efficiency. May contribute to the degradation of saturated very long-chain fatty acids (VLCFAs) such as docosanoic acid, by catalyzing successive omega-oxidations to the corresponding dicarboxylic acid, thereby initiating chain shortening. Omega-hydroxylates (9R,10S)-epoxy-octadecanoate stereoisomer. Plays a minor role in omega-oxidation of long-chain 3-hydroxy fatty acids. Has little activity toward prostaglandins A1 and E1. The polypeptide is Cytochrome P450 4A11 (Homo sapiens (Human)).